Reading from the N-terminus, the 164-residue chain is MNSSGGSCSSLMDVVAYDHHLHHGHDEELHVLAVDDNLIDRKLVERLLKISCCKVTTAENALRALEYLGLGDQNQHIDALTCNVMKVSLIITDYCMPGMTGFELLKKVKESSNLREVPVVIMSSENIPTRINKCLASGAQMFMQKPLKLADVEKLKCHLMNCRS.

One can recognise a Response regulatory domain in the interval 30–160 (HVLAVDDNLI…DVEKLKCHLM (131 aa)). Position 93 is a 4-aspartylphosphate (aspartate 93).

The protein belongs to the ARR family. Type-A subfamily. Two-component system major event consists of a His-to-Asp phosphorelay between a sensor histidine kinase (HK) and a response regulator (RR). In plants, the His-to-Asp phosphorelay involves an additional intermediate named Histidine-containing phosphotransfer protein (HPt). This multistep phosphorelay consists of a His-Asp-His-Asp sequential transfer of a phosphate group between first a His and an Asp of the HK protein, followed by the transfer to a conserved His of the HPt protein and finally the transfer to an Asp in the receiver domain of the RR protein.

The protein localises to the nucleus. Its function is as follows. Functions as a response regulator involved in His-to-Asp phosphorelay signal transduction system. Phosphorylation of the Asp residue in the receiver domain activates the ability of the protein to promote the transcription of target genes. Type-A response regulators seem to act as negative regulators of the cytokinin signaling. This Arabidopsis thaliana (Mouse-ear cress) protein is Two-component response regulator ARR16 (ARR16).